The chain runs to 193 residues: GTP cyclohydrolase-2 (193 aa).

45 to 49 (RIHSE) provides a ligand contact to GTP. Positions 50, 61, and 63 each coordinate Zn(2+). Residues Q66, 87–89 (EGR), and T109 contribute to the GTP site. The active-site Proton acceptor is the D121. R123 functions as the Nucleophile in the catalytic mechanism. Residues T144 and K149 each coordinate GTP.

Belongs to the GTP cyclohydrolase II family. It depends on Zn(2+) as a cofactor.

The enzyme catalyses GTP + 4 H2O = 2,5-diamino-6-hydroxy-4-(5-phosphoribosylamino)-pyrimidine + formate + 2 phosphate + 3 H(+). Its pathway is cofactor biosynthesis; riboflavin biosynthesis; 5-amino-6-(D-ribitylamino)uracil from GTP: step 1/4. Its function is as follows. Catalyzes the conversion of GTP to 2,5-diamino-6-ribosylamino-4(3H)-pyrimidinone 5'-phosphate (DARP), formate and pyrophosphate. The polypeptide is GTP cyclohydrolase-2 (Campylobacter hominis (strain ATCC BAA-381 / DSM 21671 / CCUG 45161 / LMG 19568 / NCTC 13146 / CH001A)).